The primary structure comprises 306 residues: Dihydroorotate dehydrogenase B (NAD(+)), catalytic subunit (306 aa).

Residues Ser24 and 48–49 each bind FMN; that span reads KA. Substrate is bound by residues Lys48 and 72–76; that span reads NAIGL. FMN contacts are provided by Asn102 and Asn130. Asn130 contributes to the substrate binding site. The Nucleophile role is filled by Cys133. FMN contacts are provided by Lys168 and Ile194. Position 195–196 (195–196) interacts with substrate; that stretch reads NT. Residues Gly220, 246-247, and 268-269 contribute to the FMN site; these read GG and GT.

It belongs to the dihydroorotate dehydrogenase family. Type 1 subfamily. Heterotetramer of 2 PyrK and 2 PyrD type B subunits. The cofactor is FMN.

The protein resides in the cytoplasm. The catalysed reaction is (S)-dihydroorotate + NAD(+) = orotate + NADH + H(+). It functions in the pathway pyrimidine metabolism; UMP biosynthesis via de novo pathway; orotate from (S)-dihydroorotate (NAD(+) route): step 1/1. Catalyzes the conversion of dihydroorotate to orotate with NAD(+) as electron acceptor. In Malacoplasma penetrans (strain HF-2) (Mycoplasma penetrans), this protein is Dihydroorotate dehydrogenase B (NAD(+)), catalytic subunit (pyrD).